Here is a 464-residue protein sequence, read N- to C-terminus: Protein FAM90A18 (464 aa).

3 disordered regions span residues methionine 1–leucine 42, proline 70–aspartate 387, and histidine 415–proline 437. Composition is skewed to basic and acidic residues over residues glycine 74–valine 89 and asparagine 97–arginine 114. The span at leucine 180–leucine 197 shows a compositional bias: low complexity.

Belongs to the FAM90 family.

The chain is Protein FAM90A18 from Homo sapiens (Human).